The chain runs to 418 residues: uncharacterized protein (418 aa).

One can recognise an N-acetyltransferase domain in the interval 7–158 (IDVRPIAEAE…TGLDPRWSGP (152 aa)). Residues 87–89 (VTV) and 95–100 (RRGLLT) contribute to the acetyl-CoA site. Catalysis depends on Tyr-128, which acts as the Proton donor. The active-site Proton acceptor; via carboxylate is the Phe-418.

This sequence belongs to the acetyltransferase Eis family. Homohexamer; trimer of dimers.

This is an uncharacterized protein from Streptomyces avermitilis (strain ATCC 31267 / DSM 46492 / JCM 5070 / NBRC 14893 / NCIMB 12804 / NRRL 8165 / MA-4680).